A 404-amino-acid polypeptide reads, in one-letter code: Cysteine desulfurase IscS (404 aa).

Residues 75-76 (AT), N155, Q183, and 203-205 (SGH) each bind pyridoxal 5'-phosphate. K206 is subject to N6-(pyridoxal phosphate)lysine. T243 serves as a coordination point for pyridoxal 5'-phosphate. Residue C328 is the Cysteine persulfide intermediate of the active site. C328 is a binding site for [2Fe-2S] cluster.

Belongs to the class-V pyridoxal-phosphate-dependent aminotransferase family. NifS/IscS subfamily. Homodimer. Forms a heterotetramer with IscU, interacts with other sulfur acceptors. Requires pyridoxal 5'-phosphate as cofactor.

The protein resides in the cytoplasm. The catalysed reaction is (sulfur carrier)-H + L-cysteine = (sulfur carrier)-SH + L-alanine. Its pathway is cofactor biosynthesis; iron-sulfur cluster biosynthesis. Functionally, master enzyme that delivers sulfur to a number of partners involved in Fe-S cluster assembly, tRNA modification or cofactor biosynthesis. Catalyzes the removal of elemental sulfur atoms from cysteine to produce alanine. Functions as a sulfur delivery protein for Fe-S cluster synthesis onto IscU, an Fe-S scaffold assembly protein, as well as other S acceptor proteins. This chain is Cysteine desulfurase IscS, found in Shewanella baltica (strain OS155 / ATCC BAA-1091).